Consider the following 1036-residue polypeptide: Isoleucine--tRNA ligase (1036 aa).

A 'HIGH' region motif is present at residues 46–56; the sequence is PFATGLPHYGH. Residues 589–593 carry the 'KMSKS' region motif; that stretch reads KMSKR. Residue Lys592 participates in ATP binding.

This sequence belongs to the class-I aminoacyl-tRNA synthetase family. IleS type 2 subfamily. Monomer. Zn(2+) serves as cofactor.

The protein localises to the cytoplasm. It catalyses the reaction tRNA(Ile) + L-isoleucine + ATP = L-isoleucyl-tRNA(Ile) + AMP + diphosphate. Functionally, catalyzes the attachment of isoleucine to tRNA(Ile). As IleRS can inadvertently accommodate and process structurally similar amino acids such as valine, to avoid such errors it has two additional distinct tRNA(Ile)-dependent editing activities. One activity is designated as 'pretransfer' editing and involves the hydrolysis of activated Val-AMP. The other activity is designated 'posttransfer' editing and involves deacylation of mischarged Val-tRNA(Ile). This Chlamydia trachomatis serovar L2 (strain ATCC VR-902B / DSM 19102 / 434/Bu) protein is Isoleucine--tRNA ligase.